The sequence spans 341 residues: Major histocompatibility complex class I-related protein 1 (341 aa).

The N-terminal stretch at 1–22 (MGELMAFLLPLIIVLMVKHSDS) is a signal peptide. The segment at 23–109 (RTHSLRYFRL…KRLQRHYNHS (87 aa)) is alpha-1. Residues 23-201 (RTHSLRYFRL…EYGKDTLQRT (179 aa)) are antigen-binding cleft. The Extracellular portion of the chain corresponds to 23–302 (RTHSLRYFRL…QESETIPLVM (280 aa)). 3 residues coordinate 5-(2-oxoethylideneamino)-6-(D-ribitylamino)uracil: Arg31, Ser46, and Lys65. 5-(2-oxopropylideneamino)-6-(D-ribitylamino)uracil is bound by residues Arg31, Ser46, and Lys65. Residues Arg31, Ser46, and Lys65 each coordinate 7-hydroxy-6-methyl-8-(1-D-ribityl)lumazine. Arg31 contacts 8-(9H-purin-6-yl)-2-oxa-8-azabicyclo[3.3.1]nona-3,6-diene-4,6-dicarbaldehyde. 8-(9H-purin-6-yl)-2-oxa-8-azabicyclo[3.3.1]nona-3,6-diene-4,6-dicarbaldehyde is bound by residues Lys65 and His80. Position 65 (Lys65) interacts with 2-amino-4-oxopteridine-6-carbaldehyde. Lys65 serves as a coordination point for pyridoxal. N-linked (GlcNAc...) asparagine glycosylation is present at Asn107. The interval 110–201 (GSHTYQRMIG…EYGKDTLQRT (92 aa)) is alpha-2. 5-(2-oxoethylideneamino)-6-(D-ribitylamino)uracil-binding residues include Arg116, Tyr174, and Gln175. Residues Arg116, Tyr174, and Gln175 each coordinate 5-(2-oxopropylideneamino)-6-(D-ribitylamino)uracil. 7-hydroxy-6-methyl-8-(1-D-ribityl)lumazine contacts are provided by Arg116, Tyr174, and Gln175. Arg116 is an 8-(9H-purin-6-yl)-2-oxa-8-azabicyclo[3.3.1]nona-3,6-diene-4,6-dicarbaldehyde binding site. 2 disulfide bridges follow: Cys120–Cys183 and Cys222–Cys278. An alpha-3 region spans residues 202-293 (EPPLVRVNRK…GVHMVLQVPQ (92 aa)). Residues 203 to 299 (PPLVRVNRKE…QVPQESETIP (97 aa)) form the Ig-like C1-type domain. Residues 294 to 302 (ESETIPLVM) are connecting peptide. The helical transmembrane segment at 303-323 (KAVSGSIVLVIVLAGVGVLVW) threads the bilayer. The Cytoplasmic segment spans residues 324–341 (RRRPREQNGAIYLPTPDR).

It belongs to the MHC class I family. In terms of assembly, heterotrimer that consists of MR1, B2M and a metabolite antigen. Major classes of metabolite ligands presented by MR1 include riboflavin-related antigens, pyrimidines and ribityl lumazines, nucleobase adducts and folate derivatives. Forms reversible covalent Schiff base complexes with microbial pyrimidine-based metabolite, which serves as a molecular switch triggering complete folding, stable association with B2M and translocation of the ternary complex from endoplasmic reticulum to the plasma membrane. Alternatively, forms non-Schiff base complexes with ribityl lumazines. On antigen-presenting cells, the ternary complex interacts with TCR on MR1-restricted T cells, predominantly represented by CD8-positive and CD4- and CD8-double negative MAIT cell subsets. Interacts with TAPBP and TAPBPL chaperones in the endoplasmic reticulum. TAPBP associated or not with MHC class I peptide loading complex binds ligand-free MR1 or MR1-B2M complex, providing for stable MR1 pools ready for metabolite antigen processing. TAPBPL interacts with MR1 in a ligand-independent way; this interaction may stabilize MR1 pool and facilitate ligand loading and dissociation. MR1-B2M heterodimer adopts a topology similar to classical MHC class I molecules, with alpha-1 and alpha-2 domains of MR1 forming the antigen-binding cleft composed of two alpha-helices resting on a floor of 7-stranded anti-parallel beta-pleated sheet. The ribityl moiety of pyrimidine-based antigens is recognized by Tyr-95 residue in the CDR3 alpha loop of the invariant TRAV1-2 TCR. As to quaternary structure, homodimerizes and does not associate with B2M. Post-translationally, N-glycosylated. In terms of tissue distribution, ubiquitous. Low expression is detected in peripheral blood B cells, T cells, monocytes and in bronchial epithelial cells (at protein level). Expressed in plasmablasts or plasma B cells in the lamina propria of ileum, appendix and colon (at protein level). Highly expressed on a subset of CD45-positive CD3-positive thymocytes (at protein level).

The protein localises to the cell membrane. It is found in the endoplasmic reticulum membrane. It localises to the golgi apparatus membrane. The protein resides in the early endosome membrane. Its subcellular location is the late endosome membrane. The protein localises to the secreted. With respect to regulation, inhibited by pterin-based metabolites such as 6-formylpterin (6-FP, a product of folic acid photodegradation). 6-FP competitively inhibits MAIT cell activation by 5-OP-RU. Modulated by commonly prescribed anti-inflammatory drug metabolites. Inhibited by salicilates such as 3-formylsalicylic and 5-formylsalicylic acids. Activated by diclofenac and/or its hydroxy metabolites. Antigen-presenting molecule specialized in displaying microbial pyrimidine-based metabolites to alpha-beta T cell receptors (TCR) on innate-type mucosal-associated invariant T (MAIT) cells. In complex with B2M preferentially presents riboflavin-derived metabolites to semi-invariant TRAV1.2 TCRs on MAIT cells, guiding immune surveillance of the microbial metabolome at mucosal epithelial barriers. Signature pyrimidine-based microbial antigens are generated via non-enzymatic condensation of metabolite intermediates of the riboflavin pathway with by-products arising from other metabolic pathways such as glycolysis. Typical potent antigenic metabolites are 5-(2-oxoethylideneamino)-6-D-ribitylaminouracil (5-OE-RU) and 5-(2-oxopropylideneamino)-6-D-ribitylaminouracil (5-OP-RU), products of condensation of 5-amino-6-D-ribityaminouracil (5-A-RU) with glyoxal or methylglyoxal by-products, respectively. May present microbial antigens to various TRAV1-2-negative MAIT cell subsets, providing for unique recognition of diverse microbes, including pathogens that do not synthesize riboflavin. Upon antigen recognition, elicits rapid innate-type MAIT cell activation to eliminate pathogenic microbes by directly killing infected cells. During T cell development, drives thymic selection and post-thymic terminal differentiation of MAIT cells in a process dependent on commensal microflora. Acts as an immune sensor of cancer cell metabolome. May present a tumor-specific or -associated metabolite essential for cancer cell survival to a 'pan-cancer' TCR consisting of TRAV38.2-DV8*TRAJ31 alpha chain paired with a TRBV25.1*TRBJ2.3 beta chain on a non-MAIT CD8-positive T cell clone (MC.7.G5), triggering T cell-mediated killing of a wide range of cancer cell types. In terms of biological role, allele MR1*01: Presents microbial-derived metabolite 5-OP-RU to semi-invariant TRAV1.2-TRAJ33-TRBV6.1 (A-F7) TCR on MAIT cells. Presents nucleobase carbonyl adducts generated during oxidative stress. Captures M3Ade, a nucleobase adduct composed of one adenine modified by a malondialdehyde trimer, for recognition by MR1-restricted T cell clones expressing a polyclonal TCR repertoire. Displays moderate binding affinity toward tumor-enriched pyridoxal and pyridoxal 5'-phosphate antigens. Its function is as follows. Allele MR1*04: Presents tumor-enriched metabolite pyridoxal to pan-cancer 7.G5 TCR on T cells enabling preferential recognition of cancer cells. May act as an alloantigen. The chain is Major histocompatibility complex class I-related protein 1 from Homo sapiens (Human).